Consider the following 360-residue polypeptide: Phospho-N-acetylmuramoyl-pentapeptide-transferase (360 aa).

The next 10 helical transmembrane spans lie at 21-41 (YVTF…LWWG), 74-94 (MGGL…GDLG), 97-117 (YVWV…IDDY), 134-154 (YILQ…SAGS), 168-188 (VMPQ…VGSS), 199-219 (GLAI…AYLS), 236-256 (SGEL…FLWF), 263-283 (VFMG…IAVL), 288-308 (ILLV…ILQV), and 338-358 (VIVR…ATLK).

It belongs to the glycosyltransferase 4 family. MraY subfamily. Requires Mg(2+) as cofactor.

The protein resides in the cell inner membrane. It carries out the reaction UDP-N-acetyl-alpha-D-muramoyl-L-alanyl-gamma-D-glutamyl-meso-2,6-diaminopimeloyl-D-alanyl-D-alanine + di-trans,octa-cis-undecaprenyl phosphate = di-trans,octa-cis-undecaprenyl diphospho-N-acetyl-alpha-D-muramoyl-L-alanyl-D-glutamyl-meso-2,6-diaminopimeloyl-D-alanyl-D-alanine + UMP. The protein operates within cell wall biogenesis; peptidoglycan biosynthesis. Catalyzes the initial step of the lipid cycle reactions in the biosynthesis of the cell wall peptidoglycan: transfers peptidoglycan precursor phospho-MurNAc-pentapeptide from UDP-MurNAc-pentapeptide onto the lipid carrier undecaprenyl phosphate, yielding undecaprenyl-pyrophosphoryl-MurNAc-pentapeptide, known as lipid I. This is Phospho-N-acetylmuramoyl-pentapeptide-transferase from Shewanella loihica (strain ATCC BAA-1088 / PV-4).